We begin with the raw amino-acid sequence, 150 residues long: Transcriptional repressor NrdR (150 aa).

The segment at 3-34 (CPFCNFSDSKVVDSRPDKGGAAIRRRRECESC) is a zinc-finger region. The ATP-cone domain occupies 49 to 139 (PLVTKRDGRR…VYRSFKDINE (91 aa)).

This sequence belongs to the NrdR family. Zn(2+) is required as a cofactor.

In terms of biological role, negatively regulates transcription of bacterial ribonucleotide reductase nrd genes and operons by binding to NrdR-boxes. The sequence is that of Transcriptional repressor NrdR from Citrifermentans bemidjiense (strain ATCC BAA-1014 / DSM 16622 / JCM 12645 / Bem) (Geobacter bemidjiensis).